Here is a 149-residue protein sequence, read N- to C-terminus: Sec-independent protein translocase protein TatB (149 aa).

The chain crosses the membrane as a helical span at residues 1–21 (MFDIGFTELIVIGIVALVVVG). A disordered region spans residues 92–149 (VDMLDKSVRNEPQNAQTPPQTADAEPAQPDVRQQTLPLEEPDQNRAAGEPSSTSTRPA). Positions 101–111 (NEPQNAQTPPQ) are enriched in polar residues.

The protein belongs to the TatB family. The Tat system comprises two distinct complexes: a TatABC complex, containing multiple copies of TatA, TatB and TatC subunits, and a separate TatA complex, containing only TatA subunits. Substrates initially bind to the TatABC complex, which probably triggers association of the separate TatA complex to form the active translocon.

Its subcellular location is the cell inner membrane. Its function is as follows. Part of the twin-arginine translocation (Tat) system that transports large folded proteins containing a characteristic twin-arginine motif in their signal peptide across membranes. Together with TatC, TatB is part of a receptor directly interacting with Tat signal peptides. TatB may form an oligomeric binding site that transiently accommodates folded Tat precursor proteins before their translocation. This Thiobacillus denitrificans (strain ATCC 25259 / T1) protein is Sec-independent protein translocase protein TatB.